Consider the following 447-residue polypeptide: MDLGKDQSLSKLHQTPDHHQEESHVPEVIGTWSLRNREQLRKRKAEAQEKQTSQWQYREKKHKRQRTGKRSERGRKRQQNTEMKVELPSQLEKEMMEKAPAPGEKEIEPPGSVTEVLLPAVSPQRVAPAKHLSEVGQESVTLQENSSEYQATAVQNQPSEICQDMAESEDLSPKMCQEIAIFQDQPFKMFRNMAQPEDVSPKTCQEDIAAKVLSSKTSEDTTDLEECSLEAHPKPDMPKASTLETYQKRPEPEEPDSETGQGIVETESFVSNTQQEMAVPKELATEIHQETVEPEHFSHKIYREIAMSKDPSHKTTQETSVPDKYPPEMYQETPGSEEYSLEIYQETTGPEAYAPEIYQETPGPEDLSTKTYKDKDVPKECFPKLYQEIGGPQDQDSKAHQEDAKDVYTFPQEMKENPKAEEPEIIEIPNVPQESNPENDIYSYVLF.

The segment at 1 to 91 is disordered; it reads MDLGKDQSLS…EMKVELPSQL (91 aa). The interval 7 to 86 is necessary for nuclear localization; that stretch reads QSLSKLHQTP…RQQNTEMKVE (80 aa). Basic and acidic residues-rich tracts occupy residues 14–25 and 35–49; these read QTPDHHQEESHV and RNRE…EAQE. A compositionally biased stretch (basic residues) spans 59–78; the sequence is EKKHKRQRTGKRSERGRKRQ. 2 positions are modified to phosphoserine: Ser-89 and Ser-122. Residues 137–156 form a disordered region; the sequence is QESVTLQENSSEYQATAVQN. Ser-200 is subject to Phosphoserine. Disordered stretches follow at residues 210-280 and 306-337; these read AKVL…MAVP and AMSK…PGSE. Position 217 is a phosphothreonine (Thr-217). The span at 306-316 shows a compositional bias: basic and acidic residues; the sequence is AMSKDPSHKTT.

Its subcellular location is the nucleus. Functionally, regulates the proliferation and differentiation of hematopoietic cells. Overexpression block the TPA-induced megakaryocytic differentiation in the K562 cell model. May also prevent cell apoptosis through the activation of the nuclear factor-kappa B (NF-kB). The protein is Hemogen (HEMGN) of Bos taurus (Bovine).